The chain runs to 341 residues: Aspartate carbamoyltransferase catalytic subunit (341 aa).

Carbamoyl phosphate-binding residues include Arg-89 and Thr-90. Lys-117 provides a ligand contact to L-aspartate. Residues Arg-139, His-169, and Gln-172 each coordinate carbamoyl phosphate. L-aspartate is bound by residues Arg-202 and Arg-257. Positions 298 and 299 each coordinate carbamoyl phosphate.

It belongs to the aspartate/ornithine carbamoyltransferase superfamily. ATCase family. Heterododecamer (2C3:3R2) of six catalytic PyrB chains organized as two trimers (C3), and six regulatory PyrI chains organized as three dimers (R2).

The enzyme catalyses carbamoyl phosphate + L-aspartate = N-carbamoyl-L-aspartate + phosphate + H(+). It participates in pyrimidine metabolism; UMP biosynthesis via de novo pathway; (S)-dihydroorotate from bicarbonate: step 2/3. Its function is as follows. Catalyzes the condensation of carbamoyl phosphate and aspartate to form carbamoyl aspartate and inorganic phosphate, the committed step in the de novo pyrimidine nucleotide biosynthesis pathway. This is Aspartate carbamoyltransferase catalytic subunit from Paraburkholderia phytofirmans (strain DSM 17436 / LMG 22146 / PsJN) (Burkholderia phytofirmans).